The sequence spans 438 residues: Putative cytochrome P450 140 (438 aa).

Cysteine 381 contacts heme.

The protein belongs to the cytochrome P450 family. Requires heme as cofactor.

In Mycobacterium bovis (strain ATCC BAA-935 / AF2122/97), this protein is Putative cytochrome P450 140 (cyp140).